Consider the following 323-residue polypeptide: tRNA dimethylallyltransferase (323 aa).

16 to 23 (GPTASGKT) is an ATP binding site. Position 18-23 (18-23 (TASGKT)) interacts with substrate. 4 interaction with substrate tRNA regions span residues 41 to 44 (DSAL), 165 to 169 (QRIQR), 253 to 258 (RCVGYR), and 286 to 293 (KRQITWLR).

Belongs to the IPP transferase family. In terms of assembly, monomer. It depends on Mg(2+) as a cofactor.

It catalyses the reaction adenosine(37) in tRNA + dimethylallyl diphosphate = N(6)-dimethylallyladenosine(37) in tRNA + diphosphate. In terms of biological role, catalyzes the transfer of a dimethylallyl group onto the adenine at position 37 in tRNAs that read codons beginning with uridine, leading to the formation of N6-(dimethylallyl)adenosine (i(6)A). This is tRNA dimethylallyltransferase from Ralstonia nicotianae (strain ATCC BAA-1114 / GMI1000) (Ralstonia solanacearum).